The following is a 345-amino-acid chain: MSRELTLQERLDGEAGPDPLRQAVKKAVAALAQAAIDISDLTCRGALAGITGEAQGRNTDGDVQKDLDVRADQIIRDALGALPIAVLASEEMAELDILNPGAPISVAFDPLDGSSNINTNISVGTIFSIMPTPPDASAAFTQPGSAQLAAGFVVYGPQTSLILTLGQGVDIFTLDRVERVFKLTGSMMQIPADATEFAINTSNRRHWDLPVRAYIDECLMGADGPSGKNFNMRWIGSLVAEAFRILVRGGIFLYPGDARDGYEDGRLRLVYEAHPMAFIIEQAGGGASTGRKRILDIVPGSLHQRVPLIMGSIKNVRRLEDMHTGPNVALEANAPLFGHRGLFRV.

Mg(2+)-binding residues include E90, D109, L111, and D112. Substrate contacts are provided by residues 112–115 (DGSS) and N200. E272 lines the Mg(2+) pocket.

It belongs to the FBPase class 1 family. Homotetramer. Requires Mg(2+) as cofactor.

Its subcellular location is the cytoplasm. The catalysed reaction is beta-D-fructose 1,6-bisphosphate + H2O = beta-D-fructose 6-phosphate + phosphate. It participates in carbohydrate biosynthesis; gluconeogenesis. This Nitrobacter hamburgensis (strain DSM 10229 / NCIMB 13809 / X14) protein is Fructose-1,6-bisphosphatase class 1 1.